Consider the following 248-residue polypeptide: tRNA pseudouridine synthase A (248 aa).

Aspartate 53 acts as the Nucleophile in catalysis. Tyrosine 116 is a substrate binding site.

This sequence belongs to the tRNA pseudouridine synthase TruA family. As to quaternary structure, homodimer.

The enzyme catalyses uridine(38/39/40) in tRNA = pseudouridine(38/39/40) in tRNA. In terms of biological role, formation of pseudouridine at positions 38, 39 and 40 in the anticodon stem and loop of transfer RNAs. The polypeptide is tRNA pseudouridine synthase A (Helicobacter hepaticus (strain ATCC 51449 / 3B1)).